We begin with the raw amino-acid sequence, 244 residues long: Cell division protein ZapD (244 aa).

The protein belongs to the ZapD family. As to quaternary structure, interacts with FtsZ.

It is found in the cytoplasm. In terms of biological role, cell division factor that enhances FtsZ-ring assembly. Directly interacts with FtsZ and promotes bundling of FtsZ protofilaments, with a reduction in FtsZ GTPase activity. This is Cell division protein ZapD from Shewanella sp. (strain MR-4).